A 512-amino-acid chain; its full sequence is PTS system mannitol-specific EIICB component (512 aa).

Residues 1 to 28 (MSQTEEKKGIGRRVQAFGSFLSSMIMPN) lie on the Cytoplasmic side of the membrane. Positions 17 to 349 (FGSFLSSMIM…MKFTREPKQD (333 aa)) constitute a PTS EIIC type-2 domain. The helical transmembrane segment at 29–50 (IGAFIAWGFIAAIFIDNGWLPN) threads the bilayer. The Extracellular segment spans residues 51 to 54 (KDLA). A helical transmembrane segment spans residues 55–75 (TLAGPMITYLIPLLIAFSGGR). The Cytoplasmic portion of the chain corresponds to 76–139 (LIYDLRGGII…QGFEMLFNNF (64 aa)). The helical transmembrane segment at 140-161 (SAGILGFIMTIAGFKILAPLMK) threads the bilayer. Residues 162–170 (FIMHILSVA) lie on the Extracellular side of the membrane. The helical transmembrane segment at 171–191 (VEALVHAHLLPLVSILVEPAK) threads the bilayer. At 192-278 (IVFLNNAINH…VLMRPLLFIA (87 aa)) the chain is on the cytoplasmic side. A helical transmembrane segment spans residues 279–298 (VILGGMTGVATYQATGFGFK). The Extracellular portion of the chain corresponds to 299–318 (SPASPGSFIVYCLNAPRGEF). Residues 319 to 340 (LHMLLGVFLAALVSFVVAALIM) traverse the membrane as a helical segment. The Cytoplasmic segment spans residues 341-512 (KFTREPKQDL…LNNLKKDDQA (172 aa)). The interval 355–402 (AQMENTKGKKSSVASKLVSSDKNVNTEENASGNVSETSSSDDDPEALL) is disordered. Residues 365–376 (SSVASKLVSSDK) show a composition bias toward low complexity. Polar residues predominate over residues 380–392 (TEENASGNVSETS). In terms of domain architecture, PTS EIIB type-2 spans 419–512 (NHVIFACDAG…LNNLKKDDQA (94 aa)). Cysteine 425 functions as the Phosphocysteine intermediate; for EIIB activity in the catalytic mechanism. Residue cysteine 425 is modified to Phosphocysteine; by EIIA.

Homodimer.

It localises to the cell membrane. The catalysed reaction is D-mannitol(out) + N(pros)-phospho-L-histidyl-[protein] = D-mannitol 1-phosphate(in) + L-histidyl-[protein]. Its function is as follows. The phosphoenolpyruvate-dependent sugar phosphotransferase system (sugar PTS), a major carbohydrate active transport system, catalyzes the phosphorylation of incoming sugar substrates concomitantly with their translocation across the cell membrane. The enzyme II CmtAB PTS system is involved in D-mannitol transport. The polypeptide is PTS system mannitol-specific EIICB component (mtlA) (Staphylococcus aureus (strain COL)).